The sequence spans 179 residues: Large ribosomal subunit protein uL5 (179 aa).

It belongs to the universal ribosomal protein uL5 family. As to quaternary structure, part of the 50S ribosomal subunit; part of the 5S rRNA/L5/L18/L25 subcomplex. Contacts the 5S rRNA and the P site tRNA. Forms a bridge to the 30S subunit in the 70S ribosome.

Its function is as follows. This is one of the proteins that bind and probably mediate the attachment of the 5S RNA into the large ribosomal subunit, where it forms part of the central protuberance. In the 70S ribosome it contacts protein S13 of the 30S subunit (bridge B1b), connecting the 2 subunits; this bridge is implicated in subunit movement. Contacts the P site tRNA; the 5S rRNA and some of its associated proteins might help stabilize positioning of ribosome-bound tRNAs. In Geobacter sp. (strain M21), this protein is Large ribosomal subunit protein uL5.